The following is a 246-amino-acid chain: V-type proton ATPase subunit D (246 aa).

The protein belongs to the V-ATPase D subunit family. In terms of assembly, V-ATPase is a heteromultimeric enzyme made up of two complexes: the ATP-hydrolytic V1 complex and the proton translocation V0 complex. The V1 complex consists of three catalytic AB heterodimers that form a heterohexamer, three peripheral stalks each consisting of EG heterodimers, one central rotor including subunits D and F, and the regulatory subunits C and H. The proton translocation complex V0 consists of the proton transport subunit a, a ring of proteolipid subunits c9c'', rotary subunit d, subunits e and f, and the accessory subunits VhaAC45 and ATP6AP2.

In terms of biological role, subunit of the V1 complex of vacuolar(H+)-ATPase (V-ATPase), a multisubunit enzyme composed of a peripheral complex (V1) that hydrolyzes ATP and a membrane integral complex (V0) that translocates protons. V-ATPase is responsible for acidifying and maintaining the pH of intracellular compartments and in some cell types, is targeted to the plasma membrane, where it is responsible for acidifying the extracellular environment. The sequence is that of V-type proton ATPase subunit D from Manduca sexta (Tobacco hawkmoth).